Consider the following 492-residue polypeptide: Catalase (492 aa).

Active-site residues include His65 and Asn138. Tyr348 is a binding site for heme.

The protein belongs to the catalase family. In terms of assembly, homotetramer. Requires heme as cofactor.

The protein resides in the cytoplasm. Its subcellular location is the cytosol. It is found in the peroxisome matrix. It catalyses the reaction 2 H2O2 = O2 + 2 H2O. In terms of biological role, catalyzes the degradation of hydrogen peroxide (H(2)O(2)) generated by peroxisomal oxidases to water and oxygen, thereby protecting cells from the toxic effects of hydrogen peroxide. This is Catalase from Soldanella alpina (Alpine snowbell).